Here is an 859-residue protein sequence, read N- to C-terminus: Bifunctional levopimaradiene synthase, chloroplastic (859 aa).

A chloroplast-targeting transit peptide spans 1-70 (MALLSSSLSS…IACVGEDSLS (70 aa)). Lysine 259 lines the substrate pocket. Aspartate 392 and aspartate 394 together coordinate Mg(2+). Positions 392-395 (DIDD) match the DXDD motif motif. Lysine 479 provides a ligand contact to substrate. Mg(2+) is bound by residues aspartate 611, aspartate 615, asparagine 755, threonine 759, and glutamate 763. Residues 611–615 (DDLYD) carry the DDXXD motif motif.

It belongs to the terpene synthase family. Tpsd subfamily. Mg(2+) serves as cofactor.

The protein resides in the plastid. It is found in the chloroplast. The enzyme catalyses (2E,6E,10E)-geranylgeranyl diphosphate = (+)-copalyl diphosphate. It catalyses the reaction (+)-copalyl diphosphate = abieta-8(14),12-diene + diphosphate. It participates in terpene metabolism; oleoresin biosynthesis. Functionally, involved in defensive oleoresin formation in conifers in response to insect attack or other injury. Involved in diterpene (C20) olefins biosynthesis. Bifunctional enzyme that catalyzes two sequential cyclizations of geranylgeranyl diphosphate (GGPP) to levopimaradiene. Levopimaradiene is the major products of the enzyme followed by abietadiene, neoabietadiene and palustradiene. The sequence is that of Bifunctional levopimaradiene synthase, chloroplastic (TPS-LAS) from Picea abies (Norway spruce).